Here is a 185-residue protein sequence, read N- to C-terminus: Threonylcarbamoyl-AMP synthase (185 aa).

The YrdC-like domain maps to 4–185 (DWRVQQVARV…LRSGEVIRPA (182 aa)).

The protein belongs to the SUA5 family. TsaC subfamily.

It localises to the cytoplasm. The catalysed reaction is L-threonine + hydrogencarbonate + ATP = L-threonylcarbamoyladenylate + diphosphate + H2O. In terms of biological role, required for the formation of a threonylcarbamoyl group on adenosine at position 37 (t(6)A37) in tRNAs that read codons beginning with adenine. Catalyzes the conversion of L-threonine, HCO(3)(-)/CO(2) and ATP to give threonylcarbamoyl-AMP (TC-AMP) as the acyladenylate intermediate, with the release of diphosphate. This is Threonylcarbamoyl-AMP synthase from Stutzerimonas stutzeri (strain A1501) (Pseudomonas stutzeri).